The sequence spans 409 residues: Calsequestrin-2 (409 aa).

The N-terminal stretch at M1 to A19 is a signal peptide. Y282 is subject to Phosphotyrosine. N335 is a glycosylation site (N-linked (GlcNAc...) asparagine). A disordered region spans residues D364–E409. Acidic residues predominate over residues E373–E409.

It belongs to the calsequestrin family. In terms of assembly, monomer, homodimer and homooligomer. Mostly monomeric in the absence of calcium. Forms higher oligomers in a calcium-dependent manner. Dimers associate to form tetramers, that then form linear homomer chains. Interacts with ASPH and TRDN. Post-translationally, phosphorylation in the C-terminus, probably by CK2, moderately increases calcium buffering capacity. In terms of processing, N-glycosylated. In terms of tissue distribution, detected in heart muscle (at protein level).

The protein localises to the sarcoplasmic reticulum lumen. Calsequestrin is a high-capacity, moderate affinity, calcium-binding protein and thus acts as an internal calcium store in muscle. Calcium ions are bound by clusters of acidic residues at the protein surface, especially at the interface between subunits. Can bind around 60 Ca(2+) ions. Regulates the release of lumenal Ca(2+) via the calcium release channel RYR2; this plays an important role in triggering muscle contraction. Plays a role in excitation-contraction coupling in the heart and in regulating the rate of heart beats. This Oryctolagus cuniculus (Rabbit) protein is Calsequestrin-2 (CASQ2).